The primary structure comprises 425 residues: MLDFDLVLFGATGDLAMRKLFVSLYEIYIHYGFKNDSRIIASGRKELSNEEFLALLCEKTQLHSREKGEEFLTHISYLRVRLDNPKDFEELSKIATNNKPLIFYFSISPSFFATTAQNLAQNALNHANTRLILEKPLGHDLKTCKEIFQSISAFFKEEQIFRIDHYLGKKGVQNILELRLNNPILNILWDQISAVEICVYETLGVEERGEFYDKIGALRDMVQNHLLQVLSLIATDLPNDLKDLRQEKIKVLKTLQPPKDFTKQVIRAQYQGYRDENKVHKESQTETFVAIKAFLDTPKFKGVPFYLKHAKKMPRNQASVKIHFNAVNTLEFFLSQDKITLTLKDHQNPLILETHNKQEFLQPYAKLLYDAIPNNHYNFAHQLELEASWVFIDTLIEGFINNATPLYSYESHNLNESEFLKPLYQ.

NADP(+) contacts are provided by arginine 44 and lysine 135. Substrate-binding residues include histidine 165, lysine 169, glutamate 201, and aspartate 220. The Proton acceptor role is filled by histidine 225. Lysine 311 is a binding site for substrate.

This sequence belongs to the glucose-6-phosphate dehydrogenase family.

It catalyses the reaction D-glucose 6-phosphate + NADP(+) = 6-phospho-D-glucono-1,5-lactone + NADPH + H(+). It participates in carbohydrate degradation; pentose phosphate pathway; D-ribulose 5-phosphate from D-glucose 6-phosphate (oxidative stage): step 1/3. Its function is as follows. Catalyzes the oxidation of glucose 6-phosphate to 6-phosphogluconolactone. The polypeptide is Glucose-6-phosphate 1-dehydrogenase (Helicobacter pylori (strain J99 / ATCC 700824) (Campylobacter pylori J99)).